The chain runs to 341 residues: Holliday junction branch migration complex subunit RuvB (341 aa).

The disordered stretch occupies residues Met-1–Glu-22. The large ATPase domain (RuvB-L) stretch occupies residues Thr-4–Tyr-193. ATP is bound by residues Ile-32, Arg-33, Gly-74, Lys-77, Thr-78, Thr-79, Glu-140–Tyr-142, Arg-183, Tyr-193, and Arg-230. Thr-78 contacts Mg(2+). The tract at residues Thr-194 to Asp-264 is small ATPAse domain (RuvB-S). A head domain (RuvB-H) region spans residues Glu-267–Asp-341. DNA is bound by residues Arg-322 and Arg-327.

The protein belongs to the RuvB family. As to quaternary structure, homohexamer. Forms an RuvA(8)-RuvB(12)-Holliday junction (HJ) complex. HJ DNA is sandwiched between 2 RuvA tetramers; dsDNA enters through RuvA and exits via RuvB. An RuvB hexamer assembles on each DNA strand where it exits the tetramer. Each RuvB hexamer is contacted by two RuvA subunits (via domain III) on 2 adjacent RuvB subunits; this complex drives branch migration. In the full resolvosome a probable DNA-RuvA(4)-RuvB(12)-RuvC(2) complex forms which resolves the HJ.

It localises to the cytoplasm. It catalyses the reaction ATP + H2O = ADP + phosphate + H(+). In terms of biological role, the RuvA-RuvB-RuvC complex processes Holliday junction (HJ) DNA during genetic recombination and DNA repair, while the RuvA-RuvB complex plays an important role in the rescue of blocked DNA replication forks via replication fork reversal (RFR). RuvA specifically binds to HJ cruciform DNA, conferring on it an open structure. The RuvB hexamer acts as an ATP-dependent pump, pulling dsDNA into and through the RuvAB complex. RuvB forms 2 homohexamers on either side of HJ DNA bound by 1 or 2 RuvA tetramers; 4 subunits per hexamer contact DNA at a time. Coordinated motions by a converter formed by DNA-disengaged RuvB subunits stimulates ATP hydrolysis and nucleotide exchange. Immobilization of the converter enables RuvB to convert the ATP-contained energy into a lever motion, pulling 2 nucleotides of DNA out of the RuvA tetramer per ATP hydrolyzed, thus driving DNA branch migration. The RuvB motors rotate together with the DNA substrate, which together with the progressing nucleotide cycle form the mechanistic basis for DNA recombination by continuous HJ branch migration. Branch migration allows RuvC to scan DNA until it finds its consensus sequence, where it cleaves and resolves cruciform DNA. This Lawsonia intracellularis (strain PHE/MN1-00) protein is Holliday junction branch migration complex subunit RuvB.